Here is a 232-residue protein sequence, read N- to C-terminus: Large ribosomal subunit protein uL1 (232 aa).

The protein belongs to the universal ribosomal protein uL1 family. In terms of assembly, part of the 50S ribosomal subunit.

Its function is as follows. Binds directly to 23S rRNA. The L1 stalk is quite mobile in the ribosome, and is involved in E site tRNA release. Functionally, protein L1 is also a translational repressor protein, it controls the translation of the L11 operon by binding to its mRNA. This Colwellia psychrerythraea (strain 34H / ATCC BAA-681) (Vibrio psychroerythus) protein is Large ribosomal subunit protein uL1.